Reading from the N-terminus, the 101-residue chain is Small ribosomal subunit protein uS14 (101 aa).

The protein belongs to the universal ribosomal protein uS14 family. Part of the 30S ribosomal subunit. Contacts proteins S3 and S10.

In terms of biological role, binds 16S rRNA, required for the assembly of 30S particles and may also be responsible for determining the conformation of the 16S rRNA at the A site. This chain is Small ribosomal subunit protein uS14, found in Colwellia psychrerythraea (strain 34H / ATCC BAA-681) (Vibrio psychroerythus).